A 207-amino-acid chain; its full sequence is 3-isopropylmalate dehydratase small subunit (207 aa).

The protein belongs to the LeuD family. LeuD type 1 subfamily. As to quaternary structure, heterodimer of LeuC and LeuD.

It carries out the reaction (2R,3S)-3-isopropylmalate = (2S)-2-isopropylmalate. Its pathway is amino-acid biosynthesis; L-leucine biosynthesis; L-leucine from 3-methyl-2-oxobutanoate: step 2/4. Catalyzes the isomerization between 2-isopropylmalate and 3-isopropylmalate, via the formation of 2-isopropylmaleate. This chain is 3-isopropylmalate dehydratase small subunit (leuD), found in Buchnera aphidicola subsp. Acyrthosiphon pisum (strain APS) (Acyrthosiphon pisum symbiotic bacterium).